Here is a 163-residue protein sequence, read N- to C-terminus: SKP1-like protein 4 (163 aa).

Positions 105-163 (ILAANYLNIGGLLDLTCKAVADQMRGKTPEQMRAHFNIKNDYTPEEEAEVRNENKWAFE) are interaction with the F-box domain of F-box proteins.

It belongs to the SKP1 family. In terms of assembly, part of a SCF (SKP1-cullin-F-box) protein ligase complex. Interacts with At1g56610, At1g67340, At3g62230, At3g59000, At4g27050, At1g55000, SKIP16 and SKIP32. In terms of tissue distribution, mostly expressed in inflorescence and siliques, and, to a lower extent, in seedlings, roots, and stems.

The protein localises to the nucleus. It functions in the pathway protein modification; protein ubiquitination. In terms of biological role, involved in ubiquitination and subsequent proteasomal degradation of target proteins. Together with CUL1, RBX1 and a F-box protein, it forms a SCF E3 ubiquitin ligase complex. The functional specificity of this complex depends on the type of F-box protein. In the SCF complex, it serves as an adapter that links the F-box protein to CUL1. This is SKP1-like protein 4 (ASK4) from Arabidopsis thaliana (Mouse-ear cress).